A 63-amino-acid chain; its full sequence is Protein BP4A (63 aa).

Pollen specific.

This chain is Protein BP4A (BP4A), found in Brassica napus (Rape).